The sequence spans 91 residues: DNA-directed RNA polymerase subunit Rpo11 (91 aa).

It belongs to the archaeal Rpo11/eukaryotic RPB11/RPC19 RNA polymerase subunit family. In terms of assembly, part of the RNA polymerase complex.

The protein localises to the cytoplasm. The catalysed reaction is RNA(n) + a ribonucleoside 5'-triphosphate = RNA(n+1) + diphosphate. DNA-dependent RNA polymerase (RNAP) catalyzes the transcription of DNA into RNA using the four ribonucleoside triphosphates as substrates. The chain is DNA-directed RNA polymerase subunit Rpo11 from Methanothrix thermoacetophila (strain DSM 6194 / JCM 14653 / NBRC 101360 / PT) (Methanosaeta thermophila).